Here is a 384-residue protein sequence, read N- to C-terminus: Na(+)/H(+) antiporter NhaA (384 aa).

A run of 11 helical transmembrane segments spans residues 9 to 29, 58 to 78, 94 to 114, 124 to 144, 153 to 173, 179 to 199, 204 to 224, 256 to 276, 285 to 305, 325 to 345, and 357 to 377; these read NLETIGGILLFIAAVLAIIIA, LLLWINDGLMAIYFLLIGLEI, LVPALTALAGLLFPALIFIFF, GWAIPTATDIAFTLGIVSLLG, ILLTAIAIFDDIAAIVIIALF, SLLSLSLALVFTLILIGLNYF, ISVFMLFGVALWIAVLKSGVH, VVFLILPLFAFANAGVSFVGL, VVLGIGLGLFLGKQLGIFLSL, VYGIALICGVGFTMSLFIGSL, and MVKIGVVFGSFIAGLTGFLVL.

Belongs to the NhaA Na(+)/H(+) (TC 2.A.33) antiporter family.

It is found in the cell inner membrane. It carries out the reaction Na(+)(in) + 2 H(+)(out) = Na(+)(out) + 2 H(+)(in). Functionally, na(+)/H(+) antiporter that extrudes sodium in exchange for external protons. This chain is Na(+)/H(+) antiporter NhaA, found in Legionella pneumophila (strain Lens).